Reading from the N-terminus, the 511-residue chain is Spermatogenesis-associated protein 2 (511 aa).

The 73-residue stretch at A77–S149 folds into the PUB domain. The PIM motif motif lies at T320–R337.

Belongs to the SPATA2 family. Interacts (via the PIM motif) with RNF31/HOIP (via the PUB domain); the interaction is direct. Interacts (via the PUB domain) with CYLD; the interaction is direct. Expressed in the testis and to a lesser extent in the brain, while skeletal muscle and kidney show weak expression.

It localises to the cytoplasm. Its subcellular location is the nucleus. Bridging factor that mediates the recruitment of CYLD to the LUBAC complex, thereby regulating TNF-alpha-induced necroptosis. Acts as a direct binding intermediate that bridges RNF31/HOIP, the catalytic subunit of the LUBAC complex, and the deubiquitinase (CYLD), thereby recruiting CYLD to the TNF-R1 signaling complex (TNF-RSC). Required to activate the 'Met-1'- (linear) and 'Lys-63'-linked deubiquitinase activities of CYLD. Controls the kinase activity of RIPK1 and TNF-alpha-induced necroptosis by promoting 'Met-1'-linked deubiquitination of RIPK1 by CYLD. The protein is Spermatogenesis-associated protein 2 of Rattus norvegicus (Rat).